We begin with the raw amino-acid sequence, 525 residues long: Zwittermicin A synthase ZmaJ (525 aa).

This sequence belongs to the ATP-dependent AMP-binding enzyme family.

The catalysed reaction is holo-[peptidyl-carrier protein] + L-serine + ATP = L-seryl-[peptidyl-carrier protein] + AMP + diphosphate. The protein operates within antibiotic biosynthesis. In terms of biological role, involved in the biosynthesis of the linear aminopolyol antibiotic zwittermicin A (ZmA). Specifically adenylates L-serine and loads it onto the holo form of ZmaH via a thioester linkage to the phosphopanthetheine moiety. This is Zwittermicin A synthase ZmaJ from Bacillus cereus.